A 207-amino-acid chain; its full sequence is MRHGLLALICWLCCVVAHSEMLNVEQSGLFRAWFVRIAQEQLRQGPSPRWYQQDCAGLVRFAANETLKVHDSKWLKSNGLSSQYLPPEMTLTPEQRQLAQNWNQGNGKTGPYVTAINLIQYNSQFIGQDINQALPGDMIFFDQGDAQHLMVWMGRYVIYHTGSATKTDNGMRAVSLQQLMTWKDTRWIPNDSNPNFIGIYRLNFLAR.

An N-terminal signal peptide occupies residues Met-1 to Ser-19.

The protein to P.aeruginosa PA4490 and T.maritima TM0986.

This is an uncharacterized protein from Escherichia coli (strain K12).